The primary structure comprises 120 residues: Large ribosomal subunit protein bL20 (120 aa).

This sequence belongs to the bacterial ribosomal protein bL20 family.

In terms of biological role, binds directly to 23S ribosomal RNA and is necessary for the in vitro assembly process of the 50S ribosomal subunit. It is not involved in the protein synthesizing functions of that subunit. The protein is Large ribosomal subunit protein bL20 of Xanthobacter autotrophicus (strain ATCC BAA-1158 / Py2).